Consider the following 420-residue polypeptide: L-cysteine:1D-myo-inositol 2-amino-2-deoxy-alpha-D-glucopyranoside ligase (420 aa).

Cys46 lines the Zn(2+) pocket. L-cysteinyl-5'-AMP-binding positions include 46-49, Thr61, and 84-86; these read CGIT and NVT. The 'HIGH' region motif lies at 48-58; the sequence is ITPYDSTHLGH. A 'ERGGDP' region motif is present at residues 194 to 199; sequence ERGGDP. An L-cysteinyl-5'-AMP-binding site is contributed by Trp235. Cys239 serves as a coordination point for Zn(2+). Residue 257-259 coordinates L-cysteinyl-5'-AMP; sequence GTD. His264 provides a ligand contact to Zn(2+). Val291 provides a ligand contact to L-cysteinyl-5'-AMP. The 'KMSKS' region signature appears at 297 to 301; sequence KMSKS.

Belongs to the class-I aminoacyl-tRNA synthetase family. MshC subfamily. Monomer. Zn(2+) serves as cofactor.

The catalysed reaction is 1D-myo-inositol 2-amino-2-deoxy-alpha-D-glucopyranoside + L-cysteine + ATP = 1D-myo-inositol 2-(L-cysteinylamino)-2-deoxy-alpha-D-glucopyranoside + AMP + diphosphate + H(+). In terms of biological role, catalyzes the ATP-dependent condensation of GlcN-Ins and L-cysteine to form L-Cys-GlcN-Ins. This chain is L-cysteine:1D-myo-inositol 2-amino-2-deoxy-alpha-D-glucopyranoside ligase, found in Beutenbergia cavernae (strain ATCC BAA-8 / DSM 12333 / CCUG 43141 / JCM 11478 / NBRC 16432 / NCIMB 13614 / HKI 0122).